We begin with the raw amino-acid sequence, 438 residues long: Transposon Ty2-LR2 Gag polyprotein (438 aa).

3 stretches are compositionally biased toward polar residues: residues Met1–His11, Ala19–Asn39, and Lys49–Thr60. 3 disordered regions span residues Met1–His88, Lys364–His397, and Val418–Ile438. The tract at residues Glu295–His397 is RNA-binding. The span at Thr369–Arg381 shows a compositional bias: low complexity.

In terms of assembly, homotrimer.

It localises to the cytoplasm. Functionally, capsid protein (CA) is the structural component of the virus-like particle (VLP), forming the shell that encapsulates the retrotransposons dimeric RNA genome. The particles are assembled from trimer-clustered units and there are holes in the capsid shells that allow for the diffusion of macromolecules. CA also has nucleocapsid-like chaperone activity, promoting primer tRNA(i)-Met annealing to the multipartite primer-binding site (PBS), dimerization of Ty2 RNA and initiation of reverse transcription. The sequence is that of Transposon Ty2-LR2 Gag polyprotein (TY2A-LR2) from Saccharomyces cerevisiae (strain ATCC 204508 / S288c) (Baker's yeast).